A 122-amino-acid polypeptide reads, in one-letter code: uncharacterized protein (122 aa).

Residues 1-33 (MASTVAGLSMSAESLRLPLLIGVSSGMLSVSDA) form the signal peptide.

This is an uncharacterized protein from Saccharomyces cerevisiae (strain ATCC 204508 / S288c) (Baker's yeast).